The following is a 601-amino-acid chain: Elongation factor 4 (601 aa).

In terms of domain architecture, tr-type G spans 6-188; sequence DHIRNFSIVA…AIVHQLPPPR (183 aa). Residues 18–23 and 135–138 each bind GTP; these read DHGKST and NKVD.

This sequence belongs to the TRAFAC class translation factor GTPase superfamily. Classic translation factor GTPase family. LepA subfamily.

The protein localises to the cell inner membrane. It catalyses the reaction GTP + H2O = GDP + phosphate + H(+). Required for accurate and efficient protein synthesis under certain stress conditions. May act as a fidelity factor of the translation reaction, by catalyzing a one-codon backward translocation of tRNAs on improperly translocated ribosomes. Back-translocation proceeds from a post-translocation (POST) complex to a pre-translocation (PRE) complex, thus giving elongation factor G a second chance to translocate the tRNAs correctly. Binds to ribosomes in a GTP-dependent manner. This chain is Elongation factor 4, found in Mesorhizobium japonicum (strain LMG 29417 / CECT 9101 / MAFF 303099) (Mesorhizobium loti (strain MAFF 303099)).